A 386-amino-acid polypeptide reads, in one-letter code: Mannitol-1-phosphate 5-dehydrogenase (386 aa).

NAD(+) is bound at residue 3 to 14 (AVHFGAGNIGRG).

It belongs to the mannitol dehydrogenase family.

The catalysed reaction is D-mannitol 1-phosphate + NAD(+) = beta-D-fructose 6-phosphate + NADH + H(+). This chain is Mannitol-1-phosphate 5-dehydrogenase, found in Brevibacillus brevis (strain 47 / JCM 6285 / NBRC 100599).